Here is a 732-residue protein sequence, read N- to C-terminus: Protein kinase YpkA (732 aa).

The Protein kinase domain occupies 136–408 (VAETDKFAEG…SNEARLHEFL (273 aa)). ATP contacts are provided by residues 142-150 (FAEGESHIS) and Lys-163. Residue Asp-270 is the Proton acceptor of the active site.

The protein belongs to the protein kinase superfamily. Ser/Thr protein kinase family.

It is found in the secreted. It carries out the reaction L-seryl-[protein] + ATP = O-phospho-L-seryl-[protein] + ADP + H(+). It catalyses the reaction L-threonyl-[protein] + ATP = O-phospho-L-threonyl-[protein] + ADP + H(+). Acts as a virulence determinant. This Yersinia pestis protein is Protein kinase YpkA (ypkA).